A 423-amino-acid polypeptide reads, in one-letter code: Keratin, type I cytoskeletal 18 (423 aa).

Serine 2 is subject to N-acetylserine. Residues 2-71 (SFTTRSTTFS…GLAGMGGIQT (70 aa)) are head. A phosphoserine mark is found at serine 7, serine 11, serine 16, and serine 19. Phosphoserine; alternate is present on residues serine 31 and serine 32. Residues serine 31 and serine 32 are each glycosylated (O-linked (GlcNAc) serine; alternate). At serine 35 the chain carries Phosphoserine. Phosphotyrosine is present on tyrosine 37. A Phosphoserine modification is found at serine 43. Omega-N-methylarginine is present on arginine 46. Serine 50 bears the Phosphoserine; alternate mark. Residue serine 50 is glycosylated (O-linked (GlcNAc) serine; alternate). Serine 52 carries the phosphoserine; by MAPKAPK2 and MAPKAPK3 modification. Phosphoserine occurs at positions 57 and 60. The interval 62 to 366 (GLAGMGGIQT…EALLNIKVKL (305 aa)) is necessary for interaction with PNN. Residues 69-121 (IQTEKETMQDLNDRLASYLDKVKSLETENRRLESKIREHLEKKGPQGVRDWGH) are interaction with TRADD. The coil 1A stretch occupies residues 72–107 (EKETMQDLNDRLASYLDKVKSLETENRRLESKIREH). The IF rod domain maps to 72-384 (EKETMQDLND…RLLEDGEDFS (313 aa)). Lysine 73 is covalently cross-linked (Glycyl lysine isopeptide (Lys-Gly) (interchain with G-Cter in SUMO2)). Serine 85 and serine 92 each carry phosphoserine. The interval 108 to 125 (LEKKGPQGVRDWGHYFKI) is linker 1. Lysine 124 carries the N6-acetyllysine modification. Positions 126–217 (IEDLRAQIFA…KNHEEEVQGL (92 aa)) are coil 1B. Phosphoserine is present on residues serine 137 and serine 170. The interval 218-241 (EAQIASSGLTVEVDAPKSQDLSKI) is linker 12. The segment at 236–384 (QDLSKIMADI…RLLEDGEDFS (149 aa)) is interaction with DNAJB6. A Glycyl lysine isopeptide (Lys-Gly) (interchain with G-Cter in SUMO2) cross-link involves residue lysine 240. Positions 242–380 (MADIRAQYEA…ATYRRLLEDG (139 aa)) are coil 2. Threonine 295 carries the phosphothreonine modification. Serine 316 is subject to Phosphoserine. Glycyl lysine isopeptide (Lys-Gly) (interchain with G-Cter in SUMO2) cross-links involve residues lysine 363 and lysine 365. The tract at residues 381-423 (EDFSLNDALDSSNSMQTVQKTTTRKIVDGRVVSETNDTRVLRH) is tail. Residues serine 384, serine 391, serine 392, and serine 394 each carry the phosphoserine modification. Threonine 397 carries the phosphothreonine modification.

This sequence belongs to the intermediate filament family. As to quaternary structure, heterotetramer of two type I and two type II keratins. KRT18 associates with KRT8. Interacts with PLEC isoform 1C, when in a heterodimer with KRT8. Interacts with PNN and mutated CFTR. Interacts with YWHAE, YWHAH and YWHAZ only when phosphorylated. Interacts with the thrombin-antithrombin complex. Interacts with DNAJB6, TCHP and TRADD. Interacts with FAM83H. Interacts with EPPK1. Interacts with PKP1 and PKP2. In terms of processing, phosphorylation increases by IL-6. Proteolytically cleaved by caspases during epithelial cell apoptosis. Cleavage occurs at Asp-231 by either caspase-3, caspas-6 or caspase-7. Post-translationally, O-GlcNAcylation increases solubility, and decreases stability by inducing proteasomal degradation. In terms of tissue distribution, expressed in endoderm, intestinal epithelial cells and in most extraembryonic tissues.

The protein resides in the nucleus matrix. It localises to the cytoplasm. The protein localises to the perinuclear region. Its subcellular location is the nucleus. It is found in the nucleolus. In terms of biological role, when phosphorylated, plays a role in filament reorganization. Involved in the delivery of mutated CFTR to the plasma membrane. Involved in the uptake of thrombin-antithrombin complexes by hepatic cells. Together with KRT8, is involved in interleukin-6 (IL-6)-mediated barrier protection. The sequence is that of Keratin, type I cytoskeletal 18 (Krt18) from Mus musculus (Mouse).